Reading from the N-terminus, the 208-residue chain is Small ribosomal subunit protein uS4 (208 aa).

One can recognise an S4 RNA-binding domain in the interval 98–158; it reads GRLDNVVYRM…EKSKKQARIK (61 aa).

Belongs to the universal ribosomal protein uS4 family. Part of the 30S ribosomal subunit. Contacts protein S5. The interaction surface between S4 and S5 is involved in control of translational fidelity.

In terms of biological role, one of the primary rRNA binding proteins, it binds directly to 16S rRNA where it nucleates assembly of the body of the 30S subunit. Functionally, with S5 and S12 plays an important role in translational accuracy. This Actinobacillus pleuropneumoniae serotype 5b (strain L20) protein is Small ribosomal subunit protein uS4.